Reading from the N-terminus, the 168-residue chain is Group IIF secretory phospholipase A2 (168 aa).

The first 20 residues, 1-20 (MKKFFTVAILAGSVLSTAHG), serve as a signal peptide directing secretion. Disulfide bonds link C46-C138, C48-C64, C63-C120, C69-C145, C70-C113, C79-C106, and C98-C111. Residues Y47, G49, and G51 each contribute to the Ca(2+) site. H67 is a catalytic residue. D68 lines the Ca(2+) pocket. N92 and N102 each carry an N-linked (GlcNAc...) asparagine glycan. Residue D114 is part of the active site. N123 and N144 each carry an N-linked (GlcNAc...) asparagine glycan. The interval 139–168 (QGPTPNCSIYEPPPEEVTCSHQSPAPPAPP) is required for localization on the plasma membrane.

The protein belongs to the phospholipase A2 family. The cofactor is Ca(2+). Expressed at high levels in placenta, testis, thymus and at lower levels in heart, kidney, liver and prostate. Highly expressed in rheumatoid arthritic tissues, including synovial lining cells in the intima, capillary endothelial cells and plasma cells.

The protein localises to the secreted. It localises to the cell membrane. It catalyses the reaction a 1,2-diacyl-sn-glycero-3-phosphocholine + H2O = a 1-acyl-sn-glycero-3-phosphocholine + a fatty acid + H(+). The enzyme catalyses 1-hexadecanoyl-2-(9Z-octadecenoyl)-sn-glycero-3-phospho-(1'-sn-glycerol) + H2O = 1-hexadecanoyl-sn-glycero-3-phospho-(1'-sn-glycerol) + (9Z)-octadecenoate + H(+). It carries out the reaction 1-hexadecanoyl-2-(9Z,12Z-octadecadienoyl)-sn-glycero-3-phosphoethanolamine + H2O = 1-hexadecanoyl-sn-glycero-3-phosphoethanolamine + (9Z,12Z)-octadecadienoate + H(+). The catalysed reaction is 1-hexadecanoyl-2-(5Z,8Z,11Z,14Z-eicosatetraenoyl)-sn-glycero-3-phosphoethanolamine + H2O = 1-hexadecanoyl-sn-glycero-3-phosphoethanolamine + (5Z,8Z,11Z,14Z)-eicosatetraenoate + H(+). It catalyses the reaction 1-hexadecanoyl-2-(9Z-octadecenoyl)-sn-glycero-3-phosphocholine + H2O = 1-hexadecanoyl-sn-glycero-3-phosphocholine + (9Z)-octadecenoate + H(+). The enzyme catalyses 1-hexadecanoyl-2-(9Z-octadecenoyl)-sn-glycero-3-phospho-L-serine + H2O = 1-hexadecanoyl-sn-glycero-3-phospho-L-serine + (9Z)-octadecenoate + H(+). In terms of biological role, secretory calcium-dependent phospholipase A2 that primarily targets extracellular phospholipids. Hydrolyzes the ester bond of the fatty acyl group attached at the sn-2 position of phospholipids (phospholipase A2 activity), the catalytic efficiency decreasing in the following order: phosphatidylglycerols &gt; phosphatidylethanolamines &gt; phosphatidylcholines &gt; phosphatidylserines. May play a role in lipid mediator production in inflammatory conditions, by providing arachidonic acid to downstream cyclooxygenases and lipoxygenases. The sequence is that of Group IIF secretory phospholipase A2 (PLA2G2F) from Homo sapiens (Human).